The primary structure comprises 72 residues: uncharacterized protein (72 aa).

The next 2 helical transmembrane spans lie at 15–35 (WEIL…IGSI) and 50–70 (ILIY…MYFI).

It localises to the host membrane. This is an uncharacterized protein from Spiroplasma melliferum (SpV1).